The chain runs to 396 residues: Elongation factor Tu (396 aa).

A tr-type G domain is found at 10-205; the sequence is KPHVNIGTIG…ACDESIPDPV (196 aa). A G1 region spans residues 19–26; it reads GHVDHGKT. 19–26 is a binding site for GTP; it reads GHVDHGKT. T26 provides a ligand contact to Mg(2+). Residues 62–66 form a G2 region; sequence GITIN. The interval 83 to 86 is G3; the sequence is DAPG. GTP contacts are provided by residues 83–87 and 138–141; these read DAPGH and NKCD. The interval 138–141 is G4; it reads NKCD. Residues 175–177 are G5; the sequence is SAL.

This sequence belongs to the TRAFAC class translation factor GTPase superfamily. Classic translation factor GTPase family. EF-Tu/EF-1A subfamily. Monomer.

It localises to the cytoplasm. It catalyses the reaction GTP + H2O = GDP + phosphate + H(+). Functionally, GTP hydrolase that promotes the GTP-dependent binding of aminoacyl-tRNA to the A-site of ribosomes during protein biosynthesis. The chain is Elongation factor Tu from Corynebacterium kroppenstedtii (strain DSM 44385 / JCM 11950 / CIP 105744 / CCUG 35717).